Consider the following 205-residue polypeptide: Ribonuclease HII (205 aa).

Positions 16–205 (VSEVGIDEVG…KSFLNQSDLI (190 aa)) constitute an RNase H type-2 domain. A divalent metal cation contacts are provided by Asp-22, Glu-23, and Asp-118.

Belongs to the RNase HII family. Mn(2+) serves as cofactor. Mg(2+) is required as a cofactor.

The protein localises to the cytoplasm. The catalysed reaction is Endonucleolytic cleavage to 5'-phosphomonoester.. Endonuclease that specifically degrades the RNA of RNA-DNA hybrids. The sequence is that of Ribonuclease HII from Prochlorococcus marinus (strain MIT 9312).